We begin with the raw amino-acid sequence, 242 residues long: Polycomb group RING finger protein 3 (242 aa).

The RING-type zinc finger occupies 17-56 (CRLCSGYLIDATTVTECLHTFCRSCLVKYLEENNTCPTCR). The disordered stretch occupies residues 115 to 149 (AKQHLDSHRNGETKADDSSNKEAAEEKPEEDNDYH). Over residues 117–140 (QHLDSHRNGETKADDSSNKEAAEE) the composition is skewed to basic and acidic residues. Positions 132–242 (SSNKEAAEEK…LHYRPKMDLL (111 aa)) are interaction with BCORL1.

As to quaternary structure, component of a PRC1-like complex that contains PCGF3, RNF2 and RYBP. Interacts with CBX6, CBX7 and CBX8. Interacts with BCORL1.

It localises to the nucleus. Its subcellular location is the nucleoplasm. Functionally, component of a Polycomb group (PcG) multiprotein PRC1-like complex, a complex class required to maintain the transcriptionally repressive state of many genes, including Hox genes, throughout development. PcG PRC1 complex acts via chromatin remodeling and modification of histones; it mediates monoubiquitination of histone H2A 'Lys-119', rendering chromatin heritably changed in its expressibility. Within the PRC1-like complex, regulates RNF2 ubiquitin ligase activity. Plays a redundant role with PCGF5 as part of a PRC1-like complex that mediates monoubiquitination of histone H2A 'Lys-119' on the X chromosome and is required for normal silencing of one copy of the X chromosome in XX females. This chain is Polycomb group RING finger protein 3 (PCGF3), found in Homo sapiens (Human).